A 121-amino-acid polypeptide reads, in one-letter code: Phospholipase A2 homolog EPL_00195 (121 aa).

Intrachain disulfides connect Cys25-Cys114, Cys27-Cys43, Cys42-Cys94, Cys48-Cys121, Cys49-Cys87, Cys56-Cys80, and Cys74-Cys85. Positions 104-116 (KKYRIYPNFLCRG) are important for membrane-damaging activities in eukaryotes and bacteria; heparin-binding.

It belongs to the phospholipase A2 family. Group II subfamily. S49 sub-subfamily. Monomer. Expressed by the venom gland.

The protein resides in the secreted. Functionally, snake venom phospholipase A2 homolog that lacks enzymatic activity. Shows high myotoxin activities and displays edema-inducing activities. Has cytotoxic activities against HUVEC cells (LC(50)=2.5 uL) and human lung adenocarcinoma A549 cells (LC(50)=2.9 uL). The chain is Phospholipase A2 homolog EPL_00195 from Echis pyramidum leakeyi (Leakey's carpet viper).